The chain runs to 265 residues: Small ribosomal subunit protein eS4 (265 aa).

An S4 RNA-binding domain is found at 42–104 (LPLILIIRNR…TNENYRLLYD (63 aa)).

This sequence belongs to the eukaryotic ribosomal protein eS4 family.

It is found in the cytoplasm. The sequence is that of Small ribosomal subunit protein eS4 (RPS4) from Zea mays (Maize).